The primary structure comprises 232 residues: Aquaporin Z 2 (232 aa).

Helical transmembrane passes span 9–29 (FLGTCWLVLGGCGSAVLASAF) and 32–52 (VGIGLLGVSFAFGLTVLTMAY). The NPA 1 motif lies at 63 to 65 (NPA). 3 consecutive transmembrane segments (helical) span residues 82-102 (VSYVIAQVAGAIIAAAVLYVI), 129-149 (LTAALVTEVVMTFFFLIIILG), and 158-178 (GFAPIAIGLALTLIHLVSIPV). An NPA 2 motif is present at residues 184-186 (NPA). A helical transmembrane segment spans residues 200–220 (LSQLWLFWIAPLFGAAIAGIV).

This sequence belongs to the MIP/aquaporin (TC 1.A.8) family. In terms of assembly, homotetramer.

The protein resides in the cell inner membrane. The enzyme catalyses H2O(in) = H2O(out). Its function is as follows. Channel that permits osmotically driven movement of water in both directions. It is involved in the osmoregulation and in the maintenance of cell turgor during volume expansion in rapidly growing cells. It mediates rapid entry or exit of water in response to abrupt changes in osmolarity. This is Aquaporin Z 2 from Rhizobium meliloti (strain 1021) (Ensifer meliloti).